We begin with the raw amino-acid sequence, 154 residues long: GTP-dependent dephospho-CoA kinase (154 aa).

3 residues coordinate GTP: Asp-34, Asp-53, and Glu-107.

Belongs to the GTP-dependent DPCK family.

It carries out the reaction 3'-dephospho-CoA + GTP = GDP + CoA + H(+). It functions in the pathway cofactor biosynthesis; coenzyme A biosynthesis. Catalyzes the GTP-dependent phosphorylation of the 3'-hydroxyl group of dephosphocoenzyme A to form coenzyme A (CoA). In Nitrosopumilus maritimus (strain SCM1), this protein is GTP-dependent dephospho-CoA kinase.